Consider the following 310-residue polypeptide: Cysteine synthase (310 aa).

Lys-46 bears the N6-(pyridoxal phosphate)lysine mark. Residues Asn-76, 180-184 (GTGGT), and Ser-268 contribute to the pyridoxal 5'-phosphate site.

Belongs to the cysteine synthase/cystathionine beta-synthase family. As to quaternary structure, homodimer. Pyridoxal 5'-phosphate serves as cofactor.

It catalyses the reaction O-acetyl-L-serine + hydrogen sulfide = L-cysteine + acetate. It functions in the pathway amino-acid biosynthesis; L-cysteine biosynthesis; L-cysteine from L-serine: step 2/2. This Staphylococcus epidermidis (strain ATCC 35984 / DSM 28319 / BCRC 17069 / CCUG 31568 / BM 3577 / RP62A) protein is Cysteine synthase (cysK).